Reading from the N-terminus, the 997-residue chain is Glutamate [NMDA] receptor subunit 1 (997 aa).

Residues 1–26 form the signal peptide; that stretch reads MAVAGFVFCWPLLGLTIVLLVAPIDA. Residues 27-573 lie on the Extracellular side of the membrane; that stretch reads AQRHTASDNP…TLVSFLQPFS (547 aa). N-linked (GlcNAc...) asparagine glycosylation is found at Asn258, Asn314, Asn345, Asn397, Asn454, Asn481, and Asn501. Glycine-binding positions include 530–532 and Arg537; that span reads PLT. Residues 574–594 form a helical membrane-spanning segment; the sequence is NTLWILVMVSVHVVALVLYLL. At 595 to 651 the chain is on the cytoplasmic side; that stretch reads DRFSPFGRFKLSHSDSNEEKALNLSSAVWFAWGVLLNSGIGEGTPRSFSARVLGMVW. The helical transmembrane segment at 652-672 threads the bilayer; sequence AGFAMIIVASYTANLAAFLVL. The Extracellular portion of the chain corresponds to 673–831; that stretch reads ERPKTKLSGI…KTPNTLGLKN (159 aa). N-linked (GlcNAc...) asparagine glycosylation is present at Asn693. 2 residues coordinate glycine: Ser703 and Asp747. The chain crosses the membrane as a helical span at residues 832–852; the sequence is MAGVFILVGVGIAGGVGLIII. Topologically, residues 853-997 are cytoplasmic; sequence EVIYKKHQVK…YTSDVSHLVV (145 aa). The segment at 970–997 is disordered; sequence LGKTRPQQSVLPPRYSPGYTSDVSHLVV. Residues 987 to 997 show a composition bias toward polar residues; it reads GYTSDVSHLVV.

Belongs to the glutamate-gated ion channel (TC 1.A.10.1) family. As to quaternary structure, forms a heteromeric NMDA channel with Nmdar2.

The protein localises to the cell membrane. The protein resides in the postsynaptic cell membrane. It is found in the postsynaptic density. NMDA receptor subtype of glutamate-gated ion channels with high calcium permeability and voltage-dependent sensitivity to magnesium. Mediated by glycine. This protein plays a key role in synaptic plasticity, synaptogenesis, excitotoxicity, memory acquisition and learning. It mediates neuronal functions in glutamate neurotransmission. Is involved in the cell surface targeting of NMDA receptors. Plays a role in associative learning and in long-term memory consolidation. The protein is Glutamate [NMDA] receptor subunit 1 of Drosophila yakuba (Fruit fly).